The primary structure comprises 590 residues: MHRYRTHTCGALRDSDIDQTVRLSGWCHRIRDHGGLLFIDLRDHYGLTQCVADPDSPAFKDAEKLRAEWVVRIDGRVRRRPEGTDNDDLPTGKIELFITEIEVLGPAGELPLPVFGEQEYPEDVRLRYRFLDLRREKLHQNIMTRGAIVDAMRARMKQQGFFEFQTPILTASSPEGARDFLVPSRIHPGKFYALPQAPQQYKQLLMMSGFDRYFQIAPCFRDEDPRADRLPGEFYQLDVEMSFVTQDDVFAAMEPVITGVFEDFAKGKRVTKGWPRIPYADSMRKYGTDKPDLRNPIEMQDVSEHFRGSGFKVFARMLEEERNQVWAIPGPGGGSRAFCDRMNSWAQGEGQPGLGYIMWREGGEGAGPLANNIGPERTEAIRAALGLKAGDAAFFVAGDPSKFVKFAGLARTKVGEELNLIDKDQFALAWVVDFPMYEYNEDDKKVDFSHNPFSMPQGGMDALLGQDPLTIKAFQYDITCNGFEIASGGIRNHRPEAMVKAFEIAGYGEQEVVDRFGGMYRAFQYGAPPHGGMAAGVDRIVMLLCGTNNLREISLFPMNQRAEDLLMGAPSQVTPKQLRELHIRLNLPEN.

Glu-175 provides a ligand contact to L-aspartate. The tract at residues 199 to 202 (QQYK) is aspartate. L-aspartate-binding residues include Arg-221 and His-450. 221–223 (RDE) contacts ATP. Residue Glu-484 participates in ATP binding. L-aspartate is bound at residue Arg-491. Residue 536–539 (GVDR) coordinates ATP.

It belongs to the class-II aminoacyl-tRNA synthetase family. Type 1 subfamily. In terms of assembly, homodimer.

Its subcellular location is the cytoplasm. The catalysed reaction is tRNA(Asx) + L-aspartate + ATP = L-aspartyl-tRNA(Asx) + AMP + diphosphate. In terms of biological role, aspartyl-tRNA synthetase with relaxed tRNA specificity since it is able to aspartylate not only its cognate tRNA(Asp) but also tRNA(Asn). Reaction proceeds in two steps: L-aspartate is first activated by ATP to form Asp-AMP and then transferred to the acceptor end of tRNA(Asp/Asn). This is Aspartate--tRNA(Asp/Asn) ligase from Rhodopseudomonas palustris (strain BisB5).